A 516-amino-acid polypeptide reads, in one-letter code: Radial spoke head protein 3 homolog A (516 aa).

3 disordered regions span residues 1–45, 120–139, and 190–233; these read MAAT…GNPA, STLNQASAMTDPNPRTAEAS, and PTGQ…PVEG. Basic residues predominate over residues 12-25; it reads AKKRPLHQRARRPA. Positions 120-129 are enriched in polar residues; sequence STLNQASAMT. Residues 208-217 show a composition bias toward basic residues; that stretch reads QARRRALARK. Over residues 218–233 the composition is skewed to basic and acidic residues; it reads RAQEQLKPRTPEPVEG. Threonine 270 carries the phosphothreonine; by MAPK1 modification. Residues 333 to 369 are a coiled coil; it reads YEEIRNVELAEVQRLEEQERRHREEKERRKKQQWEIV. A disordered region spans residues 459 to 516; that stretch reads EAMPPGQKTNVINGPNTVTDPSVTTLHTQKPVLDRVSSQPAPSQERKPVEEGGHLMAE. The span at 465 to 486 shows a compositional bias: polar residues; it reads QKTNVINGPNTVTDPSVTTLHT. Basic and acidic residues predominate over residues 502–516; it reads QERKPVEEGGHLMAE.

Belongs to the flagellar radial spoke RSP3 family. As to quaternary structure, may be a component of axonemal radial spokes. Interacts with IQUB. Interacts with phosphorylated MAPK1. Interacts with MEK1. Interacts with PKA regulatory subunits PRKAR1A and PRKAR1B. Interacts with RSPH1. Interacts with RSPH4A. Interacts with RSPH6A. Interacts with RSPH9. Interacts with CFAP61. Interacts with LRRC23.

The protein resides in the cytoplasm. Its subcellular location is the cytoskeleton. The protein localises to the cilium axoneme. It is found in the flagellum axoneme. Functionally, may function as part of axonemal radial spoke complexes that play an important part in the motility of sperm and cilia. Functions as a protein kinase A-anchoring protein that scaffolds the cAMP-dependent protein kinase holoenzyme. May serve as a point of convergence for MAPK and PKA signaling in cilia. This Mus musculus (Mouse) protein is Radial spoke head protein 3 homolog A (Rsph3a).